The sequence spans 790 residues: Probable quinate dehydrogenase (quinone) (790 aa).

Helical transmembrane passes span 22–42 (GSWYFLLMGLATALAGVLIVL), 48–68 (ALVYGVAFALTLVWALWDAGL), 77–94 (LMLPAAFAVLVALAWPAL), and 106–126 (AYGVATVLALAVVAGIGGMFV). The disordered stretch occupies residues 171–200 (RSNGRPAAGSPGPTTPGEIANSDGNGAEDQ). Over residues 174–187 (GRPAAGSPGPTTPG) the composition is skewed to low complexity.

It belongs to the bacterial PQQ dehydrogenase family. The cofactor is pyrroloquinoline quinone.

The protein localises to the cell membrane. It carries out the reaction L-quinate + a quinone = 3-dehydroquinate + a quinol. The protein operates within aromatic compound metabolism; 3,4-dihydroxybenzoate biosynthesis; 3-dehydroquinate from D-quinate (PQQ route): step 1/1. The sequence is that of Probable quinate dehydrogenase (quinone) (qumA) from Xanthomonas campestris pv. juglandis (Xanthomonas arboricola pv. juglandis).